A 558-amino-acid polypeptide reads, in one-letter code: Putative polypeptide N-acetylgalactosaminyltransferase 13 (558 aa).

Topologically, residues 1–12 (MHAGGKYCGPRH) are cytoplasmic. A helical; Signal-anchor for type II membrane protein membrane pass occupies residues 13–32 (CSFYIIAFLICQLFFLVIFI). The Lumenal portion of the chain corresponds to 33–558 (RNDDASSANE…QFALEMEGQT (526 aa)). N48 and N111 each carry an N-linked (GlcNAc...) asparagine glycan. Intrachain disulfides connect C97–C335, C326–C412, C445–C460, and C484–C498. The segment at 109-225 (EANVSVVISF…EGWLEPLLER (117 aa)) is catalytic subdomain A. Residues D150 and R186 each coordinate substrate. D209 lines the Mn(2+) pocket. S210 provides a ligand contact to substrate. H211 serves as a coordination point for Mn(2+). The interval 281–343 (PYQSPAFAGG…PCSRIGHIFR (63 aa)) is catalytic subdomain B. W312 serves as a coordination point for substrate. Residue H340 participates in Mn(2+) binding. 2 residues coordinate substrate: R343 and H346. A Ricin B-type lectin domain is found at 422–556 (VSPELRMHFD…SFQFALEMEG (135 aa)). N-linked (GlcNAc...) asparagine glycosylation is present at N501. An intrachain disulfide couples C525 to C539.

The protein belongs to the glycosyltransferase 2 family. GalNAc-T subfamily. Mn(2+) is required as a cofactor. As to expression, during embryonic stages 16-17, very weak expression in the midgut.

It is found in the golgi apparatus membrane. It catalyses the reaction L-seryl-[protein] + UDP-N-acetyl-alpha-D-galactosamine = a 3-O-[N-acetyl-alpha-D-galactosaminyl]-L-seryl-[protein] + UDP + H(+). It carries out the reaction L-threonyl-[protein] + UDP-N-acetyl-alpha-D-galactosamine = a 3-O-[N-acetyl-alpha-D-galactosaminyl]-L-threonyl-[protein] + UDP + H(+). The protein operates within protein modification; protein glycosylation. In terms of biological role, may catalyze the initial reaction in O-linked oligosaccharide biosynthesis, the transfer of an N-acetyl-D-galactosamine residue to a serine or threonine residue on the protein receptor. This chain is Putative polypeptide N-acetylgalactosaminyltransferase 13 (pgant13), found in Drosophila melanogaster (Fruit fly).